Here is a 414-residue protein sequence, read N- to C-terminus: 11-beta-hydroxysteroid dehydrogenase type 2 (414 aa).

Helical transmembrane passes span 3-23 (DFAV…GGAV), 26-46 (FLAF…ATLL), 52-72 (ALCM…WLYF), and 341-361 (YYAG…PLSI). The interval 382–414 (KQQGLSPNDNNNSIKENMNDSSSNNSNFTKCID) is disordered. Over residues 384-397 (QGLSPNDNNNSIKE) the composition is skewed to polar residues.

This sequence belongs to the short-chain dehydrogenases/reductases (SDR) family. In terms of tissue distribution, broadly expressed in peripheral (brain, gill, eye, heart, liver, head kidney, posterior kidney, and gut).

The protein localises to the membrane. It carries out the reaction an 11beta-hydroxysteroid + NAD(+) = an 11-oxosteroid + NADH + H(+). It catalyses the reaction cortisol + NAD(+) = cortisone + NADH + H(+). The enzyme catalyses corticosterone + NAD(+) = 11-dehydrocorticosterone + NADH + H(+). The catalysed reaction is 11beta,17beta-dihydroxyandrost-4-ene-3-one + NAD(+) = 17beta-hydroxyandrost-4-ene-3,11-dione + NADH + H(+). It carries out the reaction 11beta-hydroxyandrost-4-ene-3,17-dione + NAD(+) = androst-4-ene-3,11,17-trione + NADH + H(+). Its pathway is steroid metabolism. In terms of biological role, catalyzes the conversion of biologically active 11beta-hydroxyglucocorticoids (11beta-hydroxysteroid) such as cortisol, to inactive 11-ketoglucocorticoids (11-oxosteroid) such as cortisone, in the presence of NAD(+). Cortisol is the primary glucocorticoid in teleosts and is released to increase glucose bioavailability in order to meet the increased energy demands in response to stress. Functions as a dehydrogenase (oxidase), thereby decreasing the concentration of active glucocorticoids, regulating the hypothalamus-pituitary-interrenal (HPI) axis function in adult fish. Decreasing the excess glucocorticoids may be of relevance to brain function and neural proliferation. Plays a key role by catalyzing the oxidation of 11beta-hydroxytestosterone (11beta,17beta-dihydroxyandrost-4-ene-3-one) to 11-ketotestosterone (17beta-hydroxyandrost-4-ene-3,11-dione), the major fish androgen, that activates androgen receptor transcriptional activity. Catalyzes the conversion of 11beta-hydroxyandrostenedione (11beta-hydroxyandrost-4-ene-3,17-dione) to 11-ketoandrostenedione (androst-4-ene-3,11,17-trione), which can be further metabolized to 11-ketotestosterone. Exerts a dual role in fish by inactivating glucocorticoids and activating androgens. The chain is 11-beta-hydroxysteroid dehydrogenase type 2 (hsd11b2) from Danio rerio (Zebrafish).